A 1193-amino-acid chain; its full sequence is Tubulin monoglutamylase TTLL4 (1193 aa).

Disordered stretches follow at residues 1–37 (MASA…EKPS) and 468–535 (VHLD…CSSL). Polar residues predominate over residues 24–34 (PSGTVSASPSE). The span at 472-482 (QPGKEPEEAKD) shows a compositional bias: basic and acidic residues. Residues 502 to 515 (EPEDTEDELGDGLE) are compositionally biased toward acidic residues. Residues 599–942 (RRLLRWKMST…VLPNMEDIIS (344 aa)) enclose the TTL domain. A Phosphoserine modification is found at serine 686. Residues lysine 716, 722–723 (RG), 744–747 (QRYL), and 757–759 (KFD) each bind ATP. Arginine 722 contributes to the a protein binding site. Arginine 783 provides a ligand contact to L-glutamate. 804–805 (TN) serves as a coordination point for ATP. L-glutamate is bound by residues tyrosine 806, serine 807, and lysine 828. Mg(2+)-binding residues include aspartate 888, glutamate 901, and asparagine 903. Positions 913 to 1027 (PLDISIKGQM…RGQFERIFPS (115 aa)) are c-MTBD region. Lysine 919 is a binding site for L-glutamate. Low complexity predominate over residues 943–960 (SSSSPSSSSGSSTSLPSS). 2 disordered regions span residues 943–966 (SSSS…DKCQ) and 1092–1193 (MTTS…AVSS). Composition is skewed to polar residues over residues 1092–1102 (MTTSKGDGTPN) and 1131–1153 (SQAG…NTSK). Over residues 1168-1182 (SGQSSRLSAASASQS) the composition is skewed to low complexity. Polar residues predominate over residues 1183-1193 (VTDSRLTAVSS).

It belongs to the tubulin--tyrosine ligase family. The cofactor is Mg(2+). Highly expressed in testis. Expressed in brain, heart, kidney, liver, lung, muscle and spleen. In the brain, expressed in ependymal cilia, the cortex and the striatum. Expressed in blastomere.

The protein localises to the cytoplasm. It localises to the cell projection. Its subcellular location is the cilium. It is found in the cytoskeleton. The protein resides in the cilium basal body. It carries out the reaction L-glutamyl-[protein] + L-glutamate + ATP = gamma-L-glutamyl-L-glutamyl-[protein] + ADP + phosphate + H(+). Monoglutamylase which modifies both tubulin and non-tubulin proteins, adding a single glutamate on the gamma-carboxyl group of specific glutamate residues of target proteins. Involved in the side-chain initiation step of the polyglutamylation reaction but not in the elongation step. Preferentially modifies beta-tail tubulin over the alpha-tubulin. Monoglutamylates nucleosome assembly proteins NAP1L1 and NAP1L4. Monoglutamylates nucleotidyltransferase CGAS, leading to inhibition of CGAS catalytic activity, thereby preventing antiviral defense function. Involved in KLF4 glutamylation which impedes its ubiquitination, thereby leading to somatic cell reprogramming, pluripotency maintenance and embryogenesis. The chain is Tubulin monoglutamylase TTLL4 from Mus musculus (Mouse).